The sequence spans 514 residues: Cytochrome P450 monooxygenase nodJ (514 aa).

Residues 2-24 (ELIVIIITLAFCILLYGTRWRAA) form a helical membrane-spanning segment. N-linked (GlcNAc...) asparagine glycosylation is found at asparagine 144, asparagine 245, and asparagine 416. Cysteine 432 serves as a coordination point for heme.

Belongs to the cytochrome P450 family. Heme is required as a cofactor.

It localises to the membrane. It participates in secondary metabolite biosynthesis. Its function is as follows. Cytochrome P450 monooxygenase; part of the gene cluster that mediates the biosynthesis of the indole diterpenes nodulisporic acids (NA). Nodulisporic acid A (NAA) and its chemically modified derivatives are of particular significance because of their highly potent insecticidal activity against blood-feeding arthropods and lack of observable adverse effects on mammals, in particular the tremogenicity associated with the paspaline-derived IDTs is not observed. The geranylgeranyl diphosphate (GGPP) synthase ggs1, localized outside of the cluster, is proposed to catalyze the first step in nodulisporic acid biosynthesis via conversion of farnesyl pyrophosphate and isopentyl pyrophosphate into geranylgeranyl pyrophosphate (GGPP). Condensation of indole-3-glycerol phosphate with GGPP by the prenyl transferase nodC then forms 3-geranylgeranylindole (3-GGI). Epoxidation by the FAD-dependent monooxygenase nodM leads to a single-epoxidized-GGI that is substrate of the terpene cyclase nodB for cyclization to yield emindole SB. The terminal methyl carbon, C28, of emindole SB is then oxidized by the cytochrome P450 monooxygenase nodW to produce nodulisporic acid F (NAF), the pentacyclic core of NAA. NAF is converted to nodulisporic acid E (NAE) via prenylation. This step is probably performed by one of the indole diterpene prenyltransferases nodD1 or nodD2. Several oxidation steps performed by the FAD-linked oxidoreductase nodO and one of the cytochrome P450 monooxygenase nodR, nodX or nodZ further convert NAE to nodulisporic acid D (NAD). NAD is substrate of cytochrome P450 monooxygenase nodJ to produce the precursor of nodulisporic acid C (NAC), converted to NAC by one of the indole diterpene prenyltransferases nodD1 or nodD2. The FAD-dependent monooxygenase nodY2 then oxidizes NAC to nodulisporic acid B (NAB). Finally NAB is converted to NAA by one of the cytochrome P450 monooxygenases nodR, nodX or nodZ. The protein is Cytochrome P450 monooxygenase nodJ of Hypoxylon pulicicidum.